The following is a 75-amino-acid chain: Peptide Ctri10033 (75 aa).

A signal peptide spans 1–22 (MNSKYLFVFLILIVTFTDLCQG). At arginine 43 the chain carries Arginine amide. The propeptide occupies 47 to 75 (ELGSQYDYLQDFRKRELDLDDLLSKFPDY).

It belongs to the non-disulfide-bridged peptide (NDBP) superfamily. Short antimicrobial peptide (group 4) family. Expressed by the venom gland.

Its subcellular location is the secreted. This chain is Peptide Ctri10033, found in Chaerilus tricostatus (Scorpion).